The chain runs to 85 residues: Small ribosomal subunit protein bS20 (85 aa).

A disordered region spans residues 1 to 25 (MANIKSAIKRAKLSEERRAHNASIK).

The protein belongs to the bacterial ribosomal protein bS20 family.

Functionally, binds directly to 16S ribosomal RNA. This is Small ribosomal subunit protein bS20 from Bacillus anthracis (strain A0248).